An 861-amino-acid polypeptide reads, in one-letter code: DNA mismatch repair protein MutS (861 aa).

613 to 620 contributes to the ATP binding site; the sequence is GPNMGGKS.

It belongs to the DNA mismatch repair MutS family.

Functionally, this protein is involved in the repair of mismatches in DNA. It is possible that it carries out the mismatch recognition step. This protein has a weak ATPase activity. In Dichelobacter nodosus (strain VCS1703A), this protein is DNA mismatch repair protein MutS.